Reading from the N-terminus, the 388-residue chain is Succinyl-diaminopimelate desuccinylase (388 aa).

His84 is a Zn(2+) binding site. Asp86 is an active-site residue. Asp115 serves as a coordination point for Zn(2+). The active-site Proton acceptor is the Glu146. Positions 147, 175, and 360 each coordinate Zn(2+).

It belongs to the peptidase M20A family. DapE subfamily. In terms of assembly, homodimer. Zn(2+) serves as cofactor. Co(2+) is required as a cofactor.

The catalysed reaction is N-succinyl-(2S,6S)-2,6-diaminopimelate + H2O = (2S,6S)-2,6-diaminopimelate + succinate. The protein operates within amino-acid biosynthesis; L-lysine biosynthesis via DAP pathway; LL-2,6-diaminopimelate from (S)-tetrahydrodipicolinate (succinylase route): step 3/3. Its function is as follows. Catalyzes the hydrolysis of N-succinyl-L,L-diaminopimelic acid (SDAP), forming succinate and LL-2,6-diaminopimelate (DAP), an intermediate involved in the bacterial biosynthesis of lysine and meso-diaminopimelic acid, an essential component of bacterial cell walls. In Helicobacter pylori (strain G27), this protein is Succinyl-diaminopimelate desuccinylase.